We begin with the raw amino-acid sequence, 399 residues long: Elongation factor Tu (399 aa).

The region spanning Lys-10–Glu-209 is the tr-type G domain. Positions Gly-19–Thr-26 are G1. Position 19–26 (Gly-19–Thr-26) interacts with GTP. Thr-26 provides a ligand contact to Mg(2+). The tract at residues Gly-60–Asn-64 is G2. A G3 region spans residues Asp-81 to Gly-84. GTP contacts are provided by residues Asp-81–His-85 and Asn-136–Asp-139. Residues Asn-136–Asp-139 are G4. The interval Ser-174 to Leu-176 is G5.

This sequence belongs to the TRAFAC class translation factor GTPase superfamily. Classic translation factor GTPase family. EF-Tu/EF-1A subfamily. As to quaternary structure, monomer.

The protein resides in the cytoplasm. The catalysed reaction is GTP + H2O = GDP + phosphate + H(+). In terms of biological role, GTP hydrolase that promotes the GTP-dependent binding of aminoacyl-tRNA to the A-site of ribosomes during protein biosynthesis. This chain is Elongation factor Tu, found in Nautilia profundicola (strain ATCC BAA-1463 / DSM 18972 / AmH).